We begin with the raw amino-acid sequence, 156 residues long: Ribosomal RNA large subunit methyltransferase H (156 aa).

Residues glycine 104 and leucine 123–methionine 128 each bind S-adenosyl-L-methionine.

It belongs to the RNA methyltransferase RlmH family. In terms of assembly, homodimer.

Its subcellular location is the cytoplasm. The enzyme catalyses pseudouridine(1915) in 23S rRNA + S-adenosyl-L-methionine = N(3)-methylpseudouridine(1915) in 23S rRNA + S-adenosyl-L-homocysteine + H(+). In terms of biological role, specifically methylates the pseudouridine at position 1915 (m3Psi1915) in 23S rRNA. This chain is Ribosomal RNA large subunit methyltransferase H, found in Bdellovibrio bacteriovorus (strain ATCC 15356 / DSM 50701 / NCIMB 9529 / HD100).